Consider the following 229-residue polypeptide: Large ribosomal subunit protein uL1c (229 aa).

This sequence belongs to the universal ribosomal protein uL1 family. In terms of assembly, part of the 50S ribosomal subunit.

The protein resides in the plastid. Its subcellular location is the chloroplast. In terms of biological role, binds directly to 23S rRNA. Might be involved in E site tRNA release (Potential). The polypeptide is Large ribosomal subunit protein uL1c (rpl1) (Pyropia yezoensis (Susabi-nori)).